A 363-amino-acid chain; its full sequence is Histidinol-phosphate aminotransferase (363 aa).

Lys-220 carries the N6-(pyridoxal phosphate)lysine modification.

Belongs to the class-II pyridoxal-phosphate-dependent aminotransferase family. Histidinol-phosphate aminotransferase subfamily. As to quaternary structure, homodimer. Requires pyridoxal 5'-phosphate as cofactor.

The catalysed reaction is L-histidinol phosphate + 2-oxoglutarate = 3-(imidazol-4-yl)-2-oxopropyl phosphate + L-glutamate. It functions in the pathway amino-acid biosynthesis; L-histidine biosynthesis; L-histidine from 5-phospho-alpha-D-ribose 1-diphosphate: step 7/9. The sequence is that of Histidinol-phosphate aminotransferase from Paramagnetospirillum magneticum (strain ATCC 700264 / AMB-1) (Magnetospirillum magneticum).